Reading from the N-terminus, the 293-residue chain is Aromatic amino acid exporter YddG (293 aa).

The Cytoplasmic segment spans residues 1-6; sequence MTRQKA. One can recognise an EamA 1 domain in the interval 6–137; that stretch reads ATLIGLIAIV…LALVGVCWVL (132 aa). The helical transmembrane segment at 7–27 threads the bilayer; that stretch reads TLIGLIAIVLWSTMVGLIRGV. Over 28 to 33 the chain is Periplasmic; that stretch reads SEGLGP. Residues 34–54 form a helical membrane-spanning segment; it reads VGGAAAIYSLSGLLLIFTVGF. Topologically, residues 55-62 are cytoplasmic; it reads PRIRQIPK. A helical transmembrane segment spans residues 63-83; it reads GYLLAGSLLFVSYEICLALSL. Residues 84 to 92 are Periplasmic-facing; that stretch reads GYAATHHQA. Residues 93 to 113 form a helical membrane-spanning segment; sequence IEVGMVNYLWPSLTILFAILF. Over 114 to 118 the chain is Cytoplasmic; sequence NGQKT. A helical membrane pass occupies residues 119-139; that stretch reads NWLIVPGLLLALVGVCWVLGG. The Periplasmic portion of the chain corresponds to 140-155; that stretch reads DNGLHYDEIINNITTS. Residues 156–176 traverse the membrane as a helical segment; it reads PLSYFLAFIGAFIWAAYCTVT. Residues 158–285 form the EamA 2 domain; it reads SYFLAFIGAF…ALMVCGGSLL (128 aa). Topologically, residues 177 to 182 are cytoplasmic; that stretch reads NKYARG. A helical membrane pass occupies residues 183 to 203; it reads FNGITVFVLLTGASLWVYYFL. At 204 to 218 the chain is on the periplasmic side; it reads TPQPEMIFSTPVMIK. Residues 219-239 traverse the membrane as a helical segment; sequence LISAAFTLGFAYAAWNVGILH. Residues 240-243 lie on the Cytoplasmic side of the membrane; sequence GNVT. A helical membrane pass occupies residues 244-264; it reads IMAVGSYFTPVLSSALAAVLL. The Periplasmic portion of the chain corresponds to 265 to 267; the sequence is SAP. A helical membrane pass occupies residues 268–288; the sequence is LSFSFWQGALMVCGGSLLCWL. Over 289 to 293 the chain is Cytoplasmic; it reads ATRRG.

This sequence belongs to the drug/metabolite transporter (DMT) superfamily. Aromatic amino acid/paraquat exporter (ArAA/P-E) (TC 2.A.7.17) family.

It localises to the cell inner membrane. The catalysed reaction is L-phenylalanine(in) = L-phenylalanine(out). It carries out the reaction L-tyrosine(in) = L-tyrosine(out). It catalyses the reaction L-tryptophan(in) = L-tryptophan(out). The enzyme catalyses L-threonine(in) = L-threonine(out). The catalysed reaction is L-methionine(in) = L-methionine(out). It carries out the reaction L-lysine(in) = L-lysine(out). It catalyses the reaction L-glutamate(out) = L-glutamate(in). The enzyme catalyses L-valine(in) = L-valine(out). The catalysed reaction is L-isoleucine(in) = L-isoleucine(out). Its function is as follows. Amino acid transporter with broad substrate specificity. Can transport various amino acids, including phenylalanine, tyrosine, tryptophan, L-threonine, L-methionine, L-lysine, L-glutamate, L-valine and L-isoleucine. Overexpression confers resistance to phenylalanine and increases export of phenylalanine, tyrosine and tryptophan. This is Aromatic amino acid exporter YddG (yddG) from Escherichia coli (strain K12).